The sequence spans 1034 residues: Vacuolar membrane protease (1034 aa).

The Cytoplasmic portion of the chain corresponds to 1–11 (MAVKNPFGFTT). Residues 12 to 32 (GPVTFWLIVVYAAFLIPLVWI) traverse the membrane as a helical segment. Residues 33–418 (HESVPAVPSS…GFAILELRGL (386 aa)) are Vacuolar-facing. 2 N-linked (GlcNAc...) asparagine glycosylation sites follow: Asn51 and Asn141. Residues His200 and Asp212 each coordinate Zn(2+). The active-site Proton acceptor is Glu246. Zn(2+) contacts are provided by Glu247, Glu272, and His345. The chain crosses the membrane as a helical span at residues 419 to 439 (FAWTLTLLIVSPLVLALVTYI). Residues 440–470 (LSRKDKYYFFSRKVTADEDDEPVSVGGWKGF) lie on the Cytoplasmic side of the membrane. Residues 471 to 491 (FRFPFALVLSASITVLSAFLI) traverse the membrane as a helical segment. At 492–497 (RRVNPH) the chain is on the vacuolar side. Residues 498–518 (IIYSSPYAVWAMTLSLFFLVF) traverse the membrane as a helical segment. The Cytoplasmic portion of the chain corresponds to 519–536 (WTIAKGASVVRPSALQRG). The chain crosses the membrane as a helical span at residues 537–557 (YAHIWLFVISWVILVAVTAAA). Over 558-567 (DRFKIASGYP) the chain is Vacuolar. A helical membrane pass occupies residues 568–588 (FAFFHSAVFVSALISLCDLFA). Topologically, residues 589-703 (LPSKQEFARN…NLPSWTWFFQ (115 aa)) are cytoplasmic. The segment at 623-653 (HSHVEDDVAEEPTETTPLRSGENGNGNNGTI) is disordered. A helical transmembrane segment spans residues 704–724 (LLLLAPITITVFLQIALFIVS). Over 725–736 (AIHSAAADGNDP) the chain is Vacuolar. A helical membrane pass occupies residues 737-757 (ILVYAAIAAFSIIILLPATPF). Topologically, residues 758-762 (IHRAS) are cytoplasmic. The chain crosses the membrane as a helical span at residues 763–783 (FYLPLFLLLVFFVTLIYNLVA). Residues 784-1034 (FPFSAENRLK…LVEGRKKFRA (251 aa)) lie on the Vacuolar side of the membrane. Residues Asn805, Asn866, and Asn879 are each glycosylated (N-linked (GlcNAc...) asparagine).

This sequence belongs to the peptidase M28 family. The cofactor is Zn(2+).

The protein localises to the vacuole membrane. Functionally, may be involved in vacuolar sorting and osmoregulation. This chain is Vacuolar membrane protease, found in Colletotrichum graminicola (strain M1.001 / M2 / FGSC 10212) (Maize anthracnose fungus).